The chain runs to 346 residues: N-acetyl-gamma-glutamyl-phosphate reductase (346 aa).

Residue Cys150 is part of the active site.

This sequence belongs to the NAGSA dehydrogenase family. Type 1 subfamily.

It localises to the cytoplasm. It carries out the reaction N-acetyl-L-glutamate 5-semialdehyde + phosphate + NADP(+) = N-acetyl-L-glutamyl 5-phosphate + NADPH + H(+). It participates in amino-acid biosynthesis; L-arginine biosynthesis; N(2)-acetyl-L-ornithine from L-glutamate: step 3/4. In terms of biological role, catalyzes the NADPH-dependent reduction of N-acetyl-5-glutamyl phosphate to yield N-acetyl-L-glutamate 5-semialdehyde. The chain is N-acetyl-gamma-glutamyl-phosphate reductase from Lachnoclostridium phytofermentans (strain ATCC 700394 / DSM 18823 / ISDg) (Clostridium phytofermentans).